An 83-amino-acid chain; its full sequence is Short neurotoxin B (83 aa).

Positions 1–21 are cleaved as a signal peptide; sequence MKTLLLTLVVVTIVCLDLGYT. Disulfide bonds link Cys-24–Cys-45, Cys-38–Cys-62, Cys-64–Cys-75, and Cys-76–Cys-81.

The protein belongs to the three-finger toxin family. Short-chain subfamily. Type I alpha-neurotoxin sub-subfamily. In terms of tissue distribution, expressed by the venom gland.

It localises to the secreted. Binds to muscle nicotinic acetylcholine receptor (nAChR) and inhibit acetylcholine from binding to the receptor, thereby impairing neuromuscular transmission. The sequence is that of Short neurotoxin B from Laticauda laticaudata (Blue-ringed sea krait).